A 74-amino-acid chain; its full sequence is Exodeoxyribonuclease 7 small subunit (74 aa).

This sequence belongs to the XseB family. In terms of assembly, heterooligomer composed of large and small subunits.

The protein resides in the cytoplasm. The catalysed reaction is Exonucleolytic cleavage in either 5'- to 3'- or 3'- to 5'-direction to yield nucleoside 5'-phosphates.. Its function is as follows. Bidirectionally degrades single-stranded DNA into large acid-insoluble oligonucleotides, which are then degraded further into small acid-soluble oligonucleotides. The protein is Exodeoxyribonuclease 7 small subunit of Bdellovibrio bacteriovorus (strain ATCC 15356 / DSM 50701 / NCIMB 9529 / HD100).